Here is a 470-residue protein sequence, read N- to C-terminus: Cyclin-dependent kinase E-1 (470 aa).

The region spanning Y25–F333 is the Protein kinase domain. Residues I31–V39 and K55 each bind ATP. Y36 bears the Phosphotyrosine mark. The active-site Proton acceptor is D154. The interval L428 to L470 is disordered. Polar residues predominate over residues V432 to Q448.

It belongs to the protein kinase superfamily. CMGC Ser/Thr protein kinase family. CDC2/CDKX subfamily. Interacts with MED14, HDA19 and LUG. Interacts with KIN10. Expressed in roots, leaves and stems. Expressed in young dividing tissue, such as shoot and root tips, lateral root primordia, young leaves and flowers. Expressed in the inflorescence meristem, inflorescence stem and young flowers.

It is found in the nucleus. The catalysed reaction is L-seryl-[protein] + ATP = O-phospho-L-seryl-[protein] + ADP + H(+). The enzyme catalyses L-threonyl-[protein] + ATP = O-phospho-L-threonyl-[protein] + ADP + H(+). It catalyses the reaction [DNA-directed RNA polymerase] + ATP = phospho-[DNA-directed RNA polymerase] + ADP + H(+). Its function is as follows. Involved in cell differentiation. Required for the specification of stamen and carpel identities and for the proper termination of stem cells in the floral meristem. The sequence is that of Cyclin-dependent kinase E-1 (CDKE-1) from Arabidopsis thaliana (Mouse-ear cress).